The following is a 599-amino-acid chain: Vitamin B12-dependent ribonucleotide reductase (599 aa).

Residue 193 to 197 (PTGTI) coordinates substrate. The tract at residues 519-555 (LAQSAPRQAGPAKAATTAPAAKAQEPAAAPSPKQAHN) is disordered. Low complexity predominate over residues 526–553 (QAGPAKAATTAPAAKAQEPAAAPSPKQA).

It belongs to the ribonucleoside diphosphate reductase class-2 family. Adenosylcob(III)alamin is required as a cofactor.

It carries out the reaction a 2'-deoxyribonucleoside 5'-diphosphate + [thioredoxin]-disulfide + H2O = a ribonucleoside 5'-diphosphate + [thioredoxin]-dithiol. Functionally, catalyzes the reduction of ribonucleotides to deoxyribonucleotides. May function to provide a pool of deoxyribonucleotide precursors for DNA repair during oxygen limitation and/or for immediate growth after restoration of oxygen. The polypeptide is Vitamin B12-dependent ribonucleotide reductase (nrdJ) (Streptantibioticus cattleyicolor (Streptomyces cattleya)).